The following is a 477-amino-acid chain: Transcription factor Sox-9-A (477 aa).

Disordered regions lie at residues 1–66 (MNLL…ETED) and 157–274 (EAER…FRDV). A compositionally biased stretch (low complexity) spans 27 to 42 (SDDSAGSPCPSGSGSD). 2 stretches are compositionally biased toward basic and acidic residues: residues 56-66 (GDQELKKETED) and 157-174 (EAER…DYKY). Residue lysine 61 forms a Glycyl lysine isopeptide (Lys-Gly) (interchain with G-Cter in SUMO) linkage. The dimerization (DIM) stretch occupies residues 63 to 103 (ETEDEKFPVCIREAVSQVLKGYDWTLVPMPVRVNGSSKNKP). The PQA stretch occupies residues 63 to 103 (ETEDEKFPVCIREAVSQVLKGYDWTLVPMPVRVNGSSKNKP). Residues 105-173 (VKRPMNAFMV…QHKKDHPDYK (69 aa)) constitute a DNA-binding region (HMG box). A compositionally biased stretch (low complexity) spans 211–222 (SPHSSSSMSEVH). Positions 224–308 (PGEHSGQSQG…LPPNGHPGVG (85 aa)) are transactivation domain (TAM). Short sequence motifs (9aaTAD) lie at residues 276 to 285 (IGELSSEVIS) and 291 to 299 (DVNEFDQYL). Residues 301–384 (PNGHPGVGST…SDQQQQHSPQ (84 aa)) form a disordered region. 2 stretches are compositionally biased toward polar residues: residues 308 to 328 (GSTQ…SATT) and 346 to 361 (HSLS…SQQR). The tract at residues 361–477 (RTHIKTEQLS…QPVYTQLTRP (117 aa)) is transactivation domain (TAC). A Glycyl lysine isopeptide (Lys-Gly) (interchain with G-Cter in SUMO) cross-link involves residue lysine 365. The segment covering 370–384 (SPSHYSDQQQQHSPQ) has biased composition (low complexity). The 9aaTAD 3 signature appears at 428 to 436 (SGLYSTFSY). The segment at 446–477 (TPIADTTGVPSIPQTHSPQHWEQPVYTQLTRP) is disordered. The segment covering 453 to 477 (GVPSIPQTHSPQHWEQPVYTQLTRP) has biased composition (polar residues).

As to quaternary structure, interacts with the sumoylation factors ube2i/ubc9 and sumo1. Sumoylated. Lys-365 is the major site of sumoylation, although sumoylation at Lys-61 also occurs. Sumoylation plays a key role in regulating formation of the neural crest and otic placode. As to expression, from mid-gastrula (stage 10.5-11), expressed in a ring around the blastopore, with expression decreasing toward the dorsal side. At stage 12, expression around the blastopore decreases and begins to increase lateral to the neural plate in the presumptive neural crest, where expression dramatically increases around stage 14. Also expressed in the otic placode as early as stage 13/14. By the tailbud stage expression is restricted to the otic cup and then throughout the otic vesicle, with more intense staining at the dorsal-most region, the prospective region of the semicircular canals and endolymphatic duct. At the early tailbud stage (stage 23), expressed in migrating cranial neural crest cells and in the trunk neural crest. Also expressed in the genital ridges, developing eye, nasal placode and prospective pineal gland. Around stage 25, expression is down-regulated in the trunk neural crest but persists in the migrating cranial crest cells as they populate the pharyngeal arches, otic placode, developing eye, genital ridges and notochord. By stage 31, expression remains strong in the pharyngeal arches. Also expressed in the pancreas; first expressed at stage 25 in the pancreatic anlagen, dorsally in diverticulum. As development proceeds, expression continues in pancreatic tissue, being restricted to ventral and dorsal pancreatic buds.

The protein localises to the nucleus. It localises to the cytoplasm. Its function is as follows. Transcription factor that plays a key role in chondrocytes differentiation and skeletal development. Specifically binds the 5'-ACAAAG-3' DNA motif present in enhancers and super-enhancers and promotes expression of genes important for chondrogenesis, including COL2A1. Plays a central role in successive steps of chondrocyte differentiation. Absolutely required for precartilaginous condensation, the first step in chondrogenesis during which skeletal progenitors differentiate into prechondrocytes. Together with SOX5 and SOX6, required for overt chondrogenesis when condensed prechondrocytes differentiate into early stage chondrocytes, the second step in chondrogenesis. Later, required to direct hypertrophic maturation and block osteoblast differentiation of growth plate chondrocytes: maintains chondrocyte columnar proliferation, delays prehypertrophy and then prevents osteoblastic differentiation of chondrocytes. Also required for chondrocyte hypertrophy, both indirectly, by keeping the lineage fate of chondrocytes, and directly, by remaining present in upper hypertrophic cells. Low lipid levels are the main nutritional determinant for chondrogenic commitment of skeletal progenitor cells: when lipids levels are low, FOXO transcription factors promote expression of SOX9, which induces chondrogenic commitment and suppresses fatty acid oxidation. In addition to cartilage development, also acts as a regulator of proliferation and differentiation in epithelial stem/progenitor cells. Involved in development of the cranial neural crest, which is fated to form skeletal elements. Also required for otic placode specification during inner ear development. The sequence is that of Transcription factor Sox-9-A (sox9-a) from Xenopus laevis (African clawed frog).